Consider the following 203-residue polypeptide: Urease accessory protein UreG (203 aa).

14-21 (GPVGAGKT) is a binding site for GTP.

It belongs to the SIMIBI class G3E GTPase family. UreG subfamily. As to quaternary structure, homodimer. UreD, UreF and UreG form a complex that acts as a GTP-hydrolysis-dependent molecular chaperone, activating the urease apoprotein by helping to assemble the nickel containing metallocenter of UreC. The UreE protein probably delivers the nickel.

Its subcellular location is the cytoplasm. Functionally, facilitates the functional incorporation of the urease nickel metallocenter. This process requires GTP hydrolysis, probably effectuated by UreG. This Jannaschia sp. (strain CCS1) protein is Urease accessory protein UreG.